We begin with the raw amino-acid sequence, 106 residues long: Large ribosomal subunit protein eL42 (106 aa).

The interval 37–56 (SQGKRRYDRKQSGYGGQTKP) is disordered.

This sequence belongs to the eukaryotic ribosomal protein eL42 family.

The chain is Large ribosomal subunit protein eL42 (RPL44) from Pichia kudriavzevii (Yeast).